The chain runs to 346 residues: Low-temperature-induced cysteine proteinase (346 aa).

Positions 1–17 are cleaved as a propeptide — activation peptide; sequence KLSKNKSDRYLPKVGDS. Cystine bridges form between Cys-39-Cys-81, Cys-73-Cys-114, Cys-172-Cys-223, Cys-256-Cys-268, and Cys-262-Cys-283. The active site involves Cys-42. Active-site residues include His-178 and Asn-198. A glycan (N-linked (GlcNAc...) asparagine) is linked at Asn-215. Positions 238–346 are cleaved as a propeptide — removed in mature form; it reads NPPKPAPSPP…FGNGGKKSSS (109 aa).

Belongs to the peptidase C1 family.

This chain is Low-temperature-induced cysteine proteinase, found in Solanum lycopersicum (Tomato).